A 307-amino-acid chain; its full sequence is Mycothiol acetyltransferase (307 aa).

2 consecutive N-acetyltransferase domains span residues 12–152 (TRTD…APIP) and 160–307 (VTLR…YQRS). E43 is a 1D-myo-inositol 2-(L-cysteinylamino)-2-deoxy-alpha-D-glucopyranoside binding site. 87-89 (LAV) provides a ligand contact to acetyl-CoA. Residues E187, K227, and E239 each coordinate 1D-myo-inositol 2-(L-cysteinylamino)-2-deoxy-alpha-D-glucopyranoside. Acetyl-CoA contacts are provided by residues 243–245 (LGV) and 250–256 (HGGGLGK). Y278 contacts 1D-myo-inositol 2-(L-cysteinylamino)-2-deoxy-alpha-D-glucopyranoside.

It belongs to the acetyltransferase family. MshD subfamily. As to quaternary structure, monomer.

It carries out the reaction 1D-myo-inositol 2-(L-cysteinylamino)-2-deoxy-alpha-D-glucopyranoside + acetyl-CoA = mycothiol + CoA + H(+). Functionally, catalyzes the transfer of acetyl from acetyl-CoA to desacetylmycothiol (Cys-GlcN-Ins) to form mycothiol. This chain is Mycothiol acetyltransferase, found in Salinispora arenicola (strain CNS-205).